We begin with the raw amino-acid sequence, 111 residues long: Large ribosomal subunit protein P2 (111 aa).

Over residues Ala-63–Ala-84 the composition is skewed to low complexity. The interval Ala-63–Asp-111 is disordered. Residues Glu-85–Glu-97 are compositionally biased toward basic and acidic residues. Ser-98 carries the post-translational modification Phosphoserine.

In terms of assembly, part of the ribosomal stalk of the large ribosomal subunit; P1 and P2 exist as dimers which assemble on the P0 scaffold.

Its function is as follows. Plays an important role in the elongation step of protein synthesis. In Artemia salina (Brine shrimp), this protein is Large ribosomal subunit protein P2.